A 339-amino-acid chain; its full sequence is Anthranilate phosphoribosyltransferase (339 aa).

5-phospho-alpha-D-ribose 1-diphosphate-binding positions include glycine 80, 83–84 (GD), threonine 88, 90–93 (NIST), 108–116 (KHGNRSVSS), and serine 120. Anthranilate is bound at residue glycine 80. Residue serine 92 participates in Mg(2+) binding. Residue asparagine 111 participates in anthranilate binding. Position 166 (arginine 166) interacts with anthranilate. 2 residues coordinate Mg(2+): aspartate 225 and glutamate 226.

This sequence belongs to the anthranilate phosphoribosyltransferase family. Homodimer. It depends on Mg(2+) as a cofactor.

It carries out the reaction N-(5-phospho-beta-D-ribosyl)anthranilate + diphosphate = 5-phospho-alpha-D-ribose 1-diphosphate + anthranilate. The protein operates within amino-acid biosynthesis; L-tryptophan biosynthesis; L-tryptophan from chorismate: step 2/5. Its function is as follows. Catalyzes the transfer of the phosphoribosyl group of 5-phosphorylribose-1-pyrophosphate (PRPP) to anthranilate to yield N-(5'-phosphoribosyl)-anthranilate (PRA). The chain is Anthranilate phosphoribosyltransferase from Moorella thermoacetica (strain ATCC 39073 / JCM 9320).